We begin with the raw amino-acid sequence, 403 residues long: Arginine biosynthesis bifunctional protein ArgJ (403 aa).

Substrate is bound by residues Thr-151, Lys-177, Thr-188, Glu-275, Asn-398, and Ser-403. The active-site Nucleophile is the Thr-188.

This sequence belongs to the ArgJ family. In terms of assembly, heterotetramer of two alpha and two beta chains.

It is found in the cytoplasm. The catalysed reaction is N(2)-acetyl-L-ornithine + L-glutamate = N-acetyl-L-glutamate + L-ornithine. The enzyme catalyses L-glutamate + acetyl-CoA = N-acetyl-L-glutamate + CoA + H(+). Its pathway is amino-acid biosynthesis; L-arginine biosynthesis; L-ornithine and N-acetyl-L-glutamate from L-glutamate and N(2)-acetyl-L-ornithine (cyclic): step 1/1. It participates in amino-acid biosynthesis; L-arginine biosynthesis; N(2)-acetyl-L-ornithine from L-glutamate: step 1/4. Functionally, catalyzes two activities which are involved in the cyclic version of arginine biosynthesis: the synthesis of N-acetylglutamate from glutamate and acetyl-CoA as the acetyl donor, and of ornithine by transacetylation between N(2)-acetylornithine and glutamate. In Caulobacter vibrioides (strain ATCC 19089 / CIP 103742 / CB 15) (Caulobacter crescentus), this protein is Arginine biosynthesis bifunctional protein ArgJ.